The primary structure comprises 343 residues: Ferredoxin--NADP reductase (343 aa).

The FAD site is built by Asp36, Gln44, Tyr49, Val89, Phe124, Asp289, and Thr330.

This sequence belongs to the ferredoxin--NADP reductase type 2 family. Homodimer. FAD is required as a cofactor.

The catalysed reaction is 2 reduced [2Fe-2S]-[ferredoxin] + NADP(+) + H(+) = 2 oxidized [2Fe-2S]-[ferredoxin] + NADPH. The protein is Ferredoxin--NADP reductase of Mesorhizobium japonicum (strain LMG 29417 / CECT 9101 / MAFF 303099) (Mesorhizobium loti (strain MAFF 303099)).